A 467-amino-acid polypeptide reads, in one-letter code: tRNA-2-methylthio-N(6)-dimethylallyladenosine synthase (467 aa).

The disordered stretch occupies residues Met1–Ala20. In terms of domain architecture, MTTase N-terminal spans Arg23 to Gly143. [4Fe-4S] cluster contacts are provided by Cys32, Cys68, Cys106, Cys184, Cys188, and Cys191. The region spanning Arg170–Ala402 is the Radical SAM core domain. The 63-residue stretch at Asp405–Ala467 folds into the TRAM domain.

Belongs to the methylthiotransferase family. MiaB subfamily. Monomer. Requires [4Fe-4S] cluster as cofactor.

The protein resides in the cytoplasm. It catalyses the reaction N(6)-dimethylallyladenosine(37) in tRNA + (sulfur carrier)-SH + AH2 + 2 S-adenosyl-L-methionine = 2-methylsulfanyl-N(6)-dimethylallyladenosine(37) in tRNA + (sulfur carrier)-H + 5'-deoxyadenosine + L-methionine + A + S-adenosyl-L-homocysteine + 2 H(+). In terms of biological role, catalyzes the methylthiolation of N6-(dimethylallyl)adenosine (i(6)A), leading to the formation of 2-methylthio-N6-(dimethylallyl)adenosine (ms(2)i(6)A) at position 37 in tRNAs that read codons beginning with uridine. The protein is tRNA-2-methylthio-N(6)-dimethylallyladenosine synthase of Brucella abortus (strain S19).